We begin with the raw amino-acid sequence, 80 residues long: RNA-binding protein Hfq (80 aa).

Positions 10-70 (DLFLNTVRKQ…ISTIMPGQPM (61 aa)) constitute a Sm domain.

The protein belongs to the Hfq family. Homohexamer.

In terms of biological role, RNA chaperone that binds small regulatory RNA (sRNAs) and mRNAs to facilitate mRNA translational regulation in response to envelope stress, environmental stress and changes in metabolite concentrations. Also binds with high specificity to tRNAs. This Rhizobium rhizogenes (strain K84 / ATCC BAA-868) (Agrobacterium radiobacter) protein is RNA-binding protein Hfq.